The sequence spans 80 residues: WAP four-disulfide core domain protein 15B (80 aa).

A signal peptide spans 1–20; sequence MKLLGLSLLAVTILLCCNMA. One can recognise a WAP domain in the interval 29–76; that stretch reads VFSKPGYCPEYRVPCPFVLIPKCRRDKGCKDALKCCFFYCQMRCVDPW. 4 cysteine pairs are disulfide-bonded: Cys36–Cys64, Cys43–Cys68, Cys51–Cys63, and Cys57–Cys72.

Constitutively expressed in kidney and epididymis.

The protein localises to the secreted. Antibacterial protein which inhibits the growth of E.coli and S.aureus. The polypeptide is WAP four-disulfide core domain protein 15B (Wfdc15b) (Mus musculus (Mouse)).